A 110-amino-acid polypeptide reads, in one-letter code: Putative membrane protein insertion efficiency factor (110 aa).

It belongs to the UPF0161 family.

The protein localises to the cell inner membrane. In terms of biological role, could be involved in insertion of integral membrane proteins into the membrane. The sequence is that of Putative membrane protein insertion efficiency factor from Campylobacter hominis (strain ATCC BAA-381 / DSM 21671 / CCUG 45161 / LMG 19568 / NCTC 13146 / CH001A).